The following is a 75-amino-acid chain: Pi-hexatoxin-Hi1b (75 aa).

Cystine bridges form between Cys3-Cys18, Cys10-Cys23, Cys17-Cys33, Cys40-Cys55, Cys47-Cys60, and Cys54-Cys71. Domain repeat units lie at residues 3–33 and 40–71; these read CIRK…FEVC and CLVK…SSVC. Residues 3 to 71 are 2 X approximate repeats with cysteine pattern C-C-CC-C-C; that stretch reads CIRKWLSCVD…KRSGNKSSVC (69 aa).

Belongs to the psalmotoxin-1 family. Double-knot toxin subfamily. Expressed by the venom gland.

It is found in the secreted. This toxin potently and selectively inhibits ASIC1a, an isoform of the gene ASIC1. It incompletely inhibits ASIC1a activation in a pH-independent and slowly reversible manner. This toxin acts by binding to and stabilizing the closed state of the channel, thereby impeding the transition into a conducting state. This toxin may bind to the acidic pocket of ASIC1a, since mutation of a key residue of this pocket (Arg-350) abolishes the ability of the toxin to inhibit ASIC1a. In vivo, this toxin protects the brain from neuronal injury when administered up to 8 hours after stroke onset. This chain is Pi-hexatoxin-Hi1b, found in Hadronyche infensa (Fraser island funnel-web spider).